A 352-amino-acid chain; its full sequence is tRNA pseudouridine synthase D (352 aa).

Catalysis depends on Asp-78, which acts as the Nucleophile. In terms of domain architecture, TRUD spans 153 to 299; that stretch reads GVPNYYGEQR…LDQDRRPLLL (147 aa).

Belongs to the pseudouridine synthase TruD family.

It catalyses the reaction uridine(13) in tRNA = pseudouridine(13) in tRNA. Responsible for synthesis of pseudouridine from uracil-13 in transfer RNAs. In Aeromonas hydrophila subsp. hydrophila (strain ATCC 7966 / DSM 30187 / BCRC 13018 / CCUG 14551 / JCM 1027 / KCTC 2358 / NCIMB 9240 / NCTC 8049), this protein is tRNA pseudouridine synthase D.